The following is a 78-amino-acid chain: Large ribosomal subunit protein bL28 (78 aa).

Belongs to the bacterial ribosomal protein bL28 family.

The polypeptide is Large ribosomal subunit protein bL28 (Legionella pneumophila (strain Paris)).